The primary structure comprises 299 residues: tRNA uridine(34) hydroxylase (299 aa).

One can recognise a Rhodanese domain in the interval 132–226; sequence ASRPVVMLDT…YFEEVGGAHY (95 aa). Residue Cys186 is the Cysteine persulfide intermediate of the active site.

Belongs to the TrhO family.

The enzyme catalyses uridine(34) in tRNA + AH2 + O2 = 5-hydroxyuridine(34) in tRNA + A + H2O. In terms of biological role, catalyzes oxygen-dependent 5-hydroxyuridine (ho5U) modification at position 34 in tRNAs. The chain is tRNA uridine(34) hydroxylase from Burkholderia pseudomallei (strain K96243).